Here is a 369-residue protein sequence, read N- to C-terminus: Histidine decarboxylase (369 aa).

His119 is a binding site for substrate. Lys230 carries the N6-(pyridoxal phosphate)lysine modification.

It belongs to the group II decarboxylase family. Homotetramer. Pyridoxal 5'-phosphate serves as cofactor.

The catalysed reaction is L-histidine + H(+) = histamine + CO2. The protein is Histidine decarboxylase of Mesorhizobium japonicum (strain LMG 29417 / CECT 9101 / MAFF 303099) (Mesorhizobium loti (strain MAFF 303099)).